A 124-amino-acid polypeptide reads, in one-letter code: Fluoride-specific ion channel FluC (124 aa).

The next 4 membrane-spanning stretches (helical) occupy residues 3–23 (IIAI…LSIW), 34–54 (YGTL…LVLA), 66–86 (LLIV…SFET), and 100–120 (LYVL…AGVA). Residues glycine 74 and threonine 77 each contribute to the Na(+) site.

This sequence belongs to the fluoride channel Fluc/FEX (TC 1.A.43) family.

It is found in the cell membrane. The catalysed reaction is fluoride(in) = fluoride(out). Its activity is regulated as follows. Na(+) is not transported, but it plays an essential structural role and its presence is essential for fluoride channel function. Its function is as follows. Fluoride-specific ion channel. Important for reducing fluoride concentration in the cell, thus reducing its toxicity. This Roseiflexus sp. (strain RS-1) protein is Fluoride-specific ion channel FluC.